The chain runs to 266 residues: Gasdermin bGSDM (266 aa).

C6 is lipidated: S-palmitoyl cysteine. 4 beta stranded membrane-spanning segments follow: residues 70–86, 99–117, 163–180, and 189–205; these read ISHSETSRKSLQAAGNF, APKLDLSFARGAVVTFSFS, AIDMTLATDGSAKVDVQA, and LGGKAECEVKSSTTISF. The C-terminal region stretch occupies residues 245 to 266; it reads GAAEPYLLRRGQVLIVEDMQAT.

Belongs to the bacterial gasdermin family. In terms of assembly, monomer. Forms large, homooligomeric ring-shaped pores when inserted in membranes. Cleavage by the adjacently encoded protease (probably ISF6_0256) predicted to occur between Glu-244 and Gly-245 relieves autoinhibition, releasing the N-terminus which initiates loss of cell integrity. In terms of processing, palmitoylation helps stabilize the inactive state; may self palmitoylate. Palmitoylation plays a significant role in pore formation.

It localises to the cytoplasm. It is found in the cell inner membrane. With respect to regulation, the full-length protein before cleavage is inactive: intramolecular interactions between the N-terminal domain and the C-terminal region as well as the lipid modification, mediate autoinhibition. The pyroptosis-like-inducing activity is carried by the released N-terminal domain (Gasdermin bGSDM, N-terminus). Its function is as follows. Precursor of a pore-forming protein involved in defense against bacteriophages. Cleavage of this precursor by its dedicated, neighboring protease (probably ISF6_0256) releases the active moiety (gasdermin bGSDM, N-terminus) which inserts into membranes, forming pores and triggering cell death. In terms of biological role, pore-forming protein that causes membrane permeabilization via a pyroptosis-like activity. Makes ring-like pores with an interior pore diameter of 300-400 Angstroms, when integrated in liposomes. The protein is Gasdermin bGSDM of Piscinibacter sakaiensis (Ideonella sakaiensis).